Here is a 257-residue protein sequence, read N- to C-terminus: Glutamate racemase (257 aa).

Substrate contacts are provided by residues 12-13 and 44-45; these read DS and YG. The Proton donor/acceptor role is filled by C75. A substrate-binding site is contributed by 76–77; it reads NT. C185 serves as the catalytic Proton donor/acceptor. 186-187 serves as a coordination point for substrate; sequence TH.

The protein belongs to the aspartate/glutamate racemases family.

It catalyses the reaction L-glutamate = D-glutamate. It participates in cell wall biogenesis; peptidoglycan biosynthesis. Provides the (R)-glutamate required for cell wall biosynthesis. The protein is Glutamate racemase of Clostridium botulinum (strain Kyoto / Type A2).